A 292-amino-acid polypeptide reads, in one-letter code: Phosphatidylserine decarboxylase proenzyme (292 aa).

Active-site charge relay system; for autoendoproteolytic cleavage activity residues include D98, H153, and S254. The active-site Schiff-base intermediate with substrate; via pyruvic acid; for decarboxylase activity is the S254. S254 is modified (pyruvic acid (Ser); by autocatalysis).

The protein belongs to the phosphatidylserine decarboxylase family. PSD-B subfamily. Prokaryotic type I sub-subfamily. Heterodimer of a large membrane-associated beta subunit and a small pyruvoyl-containing alpha subunit. Requires pyruvate as cofactor. In terms of processing, is synthesized initially as an inactive proenzyme. Formation of the active enzyme involves a self-maturation process in which the active site pyruvoyl group is generated from an internal serine residue via an autocatalytic post-translational modification. Two non-identical subunits are generated from the proenzyme in this reaction, and the pyruvate is formed at the N-terminus of the alpha chain, which is derived from the carboxyl end of the proenzyme. The autoendoproteolytic cleavage occurs by a canonical serine protease mechanism, in which the side chain hydroxyl group of the serine supplies its oxygen atom to form the C-terminus of the beta chain, while the remainder of the serine residue undergoes an oxidative deamination to produce ammonia and the pyruvoyl prosthetic group on the alpha chain. During this reaction, the Ser that is part of the protease active site of the proenzyme becomes the pyruvoyl prosthetic group, which constitutes an essential element of the active site of the mature decarboxylase.

It localises to the cell membrane. The catalysed reaction is a 1,2-diacyl-sn-glycero-3-phospho-L-serine + H(+) = a 1,2-diacyl-sn-glycero-3-phosphoethanolamine + CO2. It participates in phospholipid metabolism; phosphatidylethanolamine biosynthesis; phosphatidylethanolamine from CDP-diacylglycerol: step 2/2. Functionally, catalyzes the formation of phosphatidylethanolamine (PtdEtn) from phosphatidylserine (PtdSer). The sequence is that of Phosphatidylserine decarboxylase proenzyme from Halorhodospira halophila (strain DSM 244 / SL1) (Ectothiorhodospira halophila (strain DSM 244 / SL1)).